A 331-amino-acid polypeptide reads, in one-letter code: Ribose operon repressor (331 aa).

Residues 1 to 56 (MTTIRDVAKHAKVSVATVSRVLNKKGYVSKEAEEAVLQAIKELNYQPSSVARSLYH) enclose the HTH lacI-type domain. Residues 4–23 (IRDVAKHAKVSVATVSRVLN) constitute a DNA-binding region (H-T-H motif).

Functionally, transcriptional repressor for the ribose rbsDACBK operon. The protein is Ribose operon repressor (rbsR) of Halalkalibacterium halodurans (strain ATCC BAA-125 / DSM 18197 / FERM 7344 / JCM 9153 / C-125) (Bacillus halodurans).